We begin with the raw amino-acid sequence, 83 residues long: Apolipoprotein C-I, acidic form (83 aa).

The signal sequence occupies residues Met1–Gly26.

The protein belongs to the apolipoprotein C1 family.

It localises to the secreted. Inhibitor of lipoprotein binding to the low density lipoprotein (LDL) receptor, LDL receptor-related protein, and very low density lipoprotein (VLDL) receptor. Associates with high density lipoproteins (HDL) and the triacylglycerol-rich lipoproteins in the plasma and makes up about 10% of the protein of the VLDL and 2% of that of HDL. Appears to interfere directly with fatty acid uptake and is also the major plasma inhibitor of cholesteryl ester transfer protein (CETP). Binds free fatty acids and reduces their intracellular esterification. Modulates the interaction of APOE with beta-migrating VLDL and inhibits binding of beta-VLDL to the LDL receptor-related protein. The protein is Apolipoprotein C-I, acidic form (APOC1A) of Pongo abelii (Sumatran orangutan).